The sequence spans 335 residues: Zinc-type alcohol dehydrogenase-like protein SAS2087 (335 aa).

Belongs to the zinc-containing alcohol dehydrogenase family. Quinone oxidoreductase subfamily.

The polypeptide is Zinc-type alcohol dehydrogenase-like protein SAS2087 (Staphylococcus aureus (strain MSSA476)).